Consider the following 317-residue polypeptide: Melanocyte-stimulating hormone receptor (317 aa).

Topologically, residues 1 to 37 (MPVLGSQRRLLGSLNCTPPATFPLTLAPNRTGPQCLE) are extracellular. N-linked (GlcNAc...) asparagine glycosylation occurs at Asn-29. The helical transmembrane segment at 38 to 63 (VSIPDGLFLSLGLVSLVENVLVVAAI) threads the bilayer. Over 64–72 (AKNRNLHSP) the chain is Cytoplasmic. Residues 73–93 (MYYFICCLAMSDLLVSVSNVL) traverse the membrane as a helical segment. Over 94–118 (ETAVMLLLEAGALAAQAAVVQQLDN) the chain is Extracellular. Residues 119-140 (VIDVLICGSMVSSLCFLGAIAV) traverse the membrane as a helical segment. At 141 to 163 (DRYISIFYALRYHSVVTLPRAWR) the chain is on the cytoplasmic side. A helical membrane pass occupies residues 164–183 (IIAAIWVASILTSLLFITYY). Over 184–191 (NHTVVLLC) the chain is Extracellular. The chain crosses the membrane as a helical span at residues 192–211 (LVGFFIAMLALMAVLYVHML). The Cytoplasmic segment spans residues 212 to 240 (ARACQHARGIARLQKRQRPIHQGFGLKGA). A helical membrane pass occupies residues 241 to 266 (ATLTILLGVFFLCWGPFFLHLSLIVL). Over 267–279 (CPQHPTCGCIFKN) the chain is Extracellular. A helical transmembrane segment spans residues 280–300 (FNLFLALIICNAIVDPLIYAF). Over 301-317 (RSQELRKTLQEVLQCSW) the chain is Cytoplasmic. The S-palmitoyl cysteine moiety is linked to residue Cys-315.

This sequence belongs to the G-protein coupled receptor 1 family. In terms of assembly, interacts with MGRN1, but does not undergo MGRN1-mediated ubiquitination; this interaction competes with GNAS-binding and thus inhibits agonist-induced cAMP production. Interacts with OPN3; the interaction results in a decrease in MC1R-mediated cAMP signaling and ultimately a decrease in melanin production in melanocytes.

It localises to the cell membrane. In terms of biological role, receptor for MSH (alpha, beta and gamma) and ACTH. The activity of this receptor is mediated by G proteins which activate adenylate cyclase. Mediates melanogenesis, the production of eumelanin (black/brown) and phaeomelanin (red/yellow), via regulation of cAMP signaling in melanocytes. The protein is Melanocyte-stimulating hormone receptor (MC1R) of Dama dama (Fallow deer).